Reading from the N-terminus, the 495-residue chain is Internal alternative NAD(P)H-ubiquinone oxidoreductase A1, mitochondrial (495 aa).

The transit peptide at 1 to 41 directs the protein to the mitochondrion; it reads MPWFKNLIKISKTITNQSSSYKSITPLASPLLAQFLQFTKQ. Residue 61-91 participates in FAD binding; sequence RIVVLGSGWAGCRLMKDIDTNIYDVVCVSPR. 228–264 lines the NAD(+) pocket; the sequence is LHCVVVGGGPTGVEFSGELSDFILKDVHQRYAHVKDY. Positions 486–495 match the Microbody targeting signal motif; sequence LVFGRDISRI.

The protein belongs to the NADH dehydrogenase family. Requires FAD as cofactor.

The protein localises to the mitochondrion inner membrane. It is found in the peroxisome. The catalysed reaction is a quinone + NADH + H(+) = a quinol + NAD(+). It carries out the reaction a ubiquinone + NADH + H(+) = a ubiquinol + NAD(+). Its function is as follows. Alternative NADH-ubiquinone oxidoreductase which catalyzes the oxidation of mitochondrial NADH does not translocate protons across the inner mitochondrial membrane. This Solanum tuberosum (Potato) protein is Internal alternative NAD(P)H-ubiquinone oxidoreductase A1, mitochondrial (NDA1).